Consider the following 493-residue polypeptide: Kelch-like protein 42 (493 aa).

The BTB domain occupies 5–77; that stretch reads EMVQIRLEDR…INAGGAREGW (73 aa). Kelch repeat units follow at residues 183 to 241, 242 to 289, 291 to 332, 334 to 379, 381 to 436, and 438 to 487; these read VLVA…ILDN, YLFI…AVNS, LYAI…ECKG, IYVI…SVEE, IYIV…ALHN, and GIYI…SLYL.

As to quaternary structure, component of the BCR(KLHL42) E3 ubiquitin ligase complex, at least composed of CUL3 and KLHL42. Interacts (via the BTB domain) with CUL3. Interacts (via the kelch domains) with KATNA1.

It is found in the cytoplasm. Its subcellular location is the cytoskeleton. It localises to the spindle. It participates in protein modification; protein ubiquitination. Functionally, substrate-specific adapter of a BCR (BTB-CUL3-RBX1) E3 ubiquitin-protein ligase complex required for mitotic progression and cytokinesis. The BCR(KLHL42) E3 ubiquitin ligase complex mediates the ubiquitination and subsequent degradation of KATNA1. Involved in microtubule dynamics throughout mitosis. This chain is Kelch-like protein 42 (Klhl42), found in Mus musculus (Mouse).